Here is a 282-residue protein sequence, read N- to C-terminus: Deoxyribonuclease-1 (282 aa).

Residues 1–22 form the signal peptide; it reads MRGTRLMGLLLALAGLLQLGLS. N-linked (GlcNAc...) asparagine glycosylation occurs at Asn40. Residue Glu100 is part of the active site. A disulfide bridge links Cys123 with Cys126. The active site involves His156. Cysteines 195 and 231 form a disulfide.

Belongs to the DNase I family. Requires Ca(2+) as cofactor. Mg(2+) serves as cofactor. In terms of processing, the only differences between the A and B forms and the C and D forms are in the compositions of the carbohydrate bound to Asn-40.

The protein localises to the secreted. It localises to the zymogen granule. The protein resides in the nucleus envelope. The enzyme catalyses Endonucleolytic cleavage to 5'-phosphodinucleotide and 5'-phosphooligonucleotide end-products.. In terms of biological role, serum endocuclease secreted into body fluids by a wide variety of exocrine and endocrine organs. Expressed by non-hematopoietic tissues and preferentially cleaves protein-free DNA. Among other functions, seems to be involved in cell death by apoptosis. Binds specifically to G-actin and blocks actin polymerization. Together with DNASE1L3, plays a key role in degrading neutrophil extracellular traps (NETs). NETs are mainly composed of DNA fibers and are released by neutrophils to bind pathogens during inflammation. Degradation of intravascular NETs by DNASE1 and DNASE1L3 is required to prevent formation of clots that obstruct blood vessels and cause organ damage following inflammation. This chain is Deoxyribonuclease-1 (DNASE1), found in Bos taurus (Bovine).